The primary structure comprises 238 residues: Large ribosomal subunit protein uL3 (238 aa).

Gln-157 bears the N5-methylglutamine mark.

The protein belongs to the universal ribosomal protein uL3 family. As to quaternary structure, part of the 50S ribosomal subunit. Forms a cluster with proteins L14 and L19. Methylated by PrmB.

Its function is as follows. One of the primary rRNA binding proteins, it binds directly near the 3'-end of the 23S rRNA, where it nucleates assembly of the 50S subunit. The protein is Large ribosomal subunit protein uL3 of Ruthia magnifica subsp. Calyptogena magnifica.